We begin with the raw amino-acid sequence, 405 residues long: Indoleamine 2,3-dioxygenase 2 (405 aa).

Histidine 347 lines the heme pocket.

This sequence belongs to the indoleamine 2,3-dioxygenase family. Heme serves as cofactor. Expressed mainly in antigen-presenting immune cells, liver, kidney, brain, and placenta. Highly expressed in kidney, followed by epididymis and liver (at protein level). Detected in the tails of the spermatozoa in the testis and in the kidney tubules (at protein level). Constitutively expressed in brain.

The catalysed reaction is L-tryptophan + O2 = N-formyl-L-kynurenine. Its pathway is amino-acid degradation; L-tryptophan degradation via kynurenine pathway; L-kynurenine from L-tryptophan: step 1/2. Activity is inhibited by D-1MT (1-methyl-D-tryptophan) and MTH-trp (methylthiohydantoin-DL-tryptophan) but not L-1MT (1-methyl-L-tryptophan). Its function is as follows. Catalyzes the first and rate-limiting step in the kynurenine pathway of tryptophan catabolism. Involved in immune regulation. This chain is Indoleamine 2,3-dioxygenase 2, found in Mus musculus (Mouse).